We begin with the raw amino-acid sequence, 201 residues long: MALHDENVVWHSHPVTVQQRELHHGHRGVVLWFTGLSGSGKSTVAGALEEALHKLGVSTYLLDGDNVRHGLCSDLGFSDADRKENIRRVGEVANLMVEAGLVVLTAFISPHRAERQMVRERVGEGRFIEVFVDTPLAICEARDPKGLYKKARAGELRYFTGIDSVYEAPESAEIHLNGEQLVTNLVQQLLDLLRQNDIIRS.

35–42 provides a ligand contact to ATP; that stretch reads GLSGSGKS. Ser109 functions as the Phosphoserine intermediate in the catalytic mechanism.

Belongs to the APS kinase family.

The catalysed reaction is adenosine 5'-phosphosulfate + ATP = 3'-phosphoadenylyl sulfate + ADP + H(+). It functions in the pathway sulfur metabolism; hydrogen sulfide biosynthesis; sulfite from sulfate: step 2/3. Its function is as follows. Catalyzes the synthesis of activated sulfate. The polypeptide is Adenylyl-sulfate kinase (Escherichia coli (strain ATCC 8739 / DSM 1576 / NBRC 3972 / NCIMB 8545 / WDCM 00012 / Crooks)).